A 414-amino-acid polypeptide reads, in one-letter code: Probable protein phosphatase 2C 9 (414 aa).

The helical transmembrane segment at Thr-15–Asp-37 threads the bilayer. A disordered region spans residues Leu-56–Glu-95. The PPM-type phosphatase domain occupies Arg-99–Leu-410. 2 residues coordinate Mn(2+): Asp-136 and Gly-137. Residues Gly-186–Asp-195 show a composition bias toward basic and acidic residues. The segment at Gly-186–Ala-212 is disordered. Residue Asp-319 participates in Mn(2+) binding. The segment at Ala-345 to Gly-372 is disordered. The segment covering Ser-355 to Ser-369 has biased composition (low complexity). Residue Asp-401 coordinates Mn(2+).

The protein belongs to the PP2C family. Mg(2+) is required as a cofactor. It depends on Mn(2+) as a cofactor.

The protein resides in the membrane. It catalyses the reaction O-phospho-L-seryl-[protein] + H2O = L-seryl-[protein] + phosphate. The enzyme catalyses O-phospho-L-threonyl-[protein] + H2O = L-threonyl-[protein] + phosphate. The polypeptide is Probable protein phosphatase 2C 9 (Oryza sativa subsp. japonica (Rice)).